A 52-amino-acid polypeptide reads, in one-letter code: Ovomucoid (52 aa).

The 51-residue stretch at 2–52 (VDCSEYPKPACPKDYRPVCGSDNKTYGNKCNFCNAVVESNGTLTLNRFGKC) folds into the Kazal-like domain. Intrachain disulfides connect cysteine 4/cysteine 34, cysteine 12/cysteine 31, and cysteine 20/cysteine 52. The N-linked (GlcNAc...) asparagine glycan is linked to asparagine 41.

The protein localises to the secreted. In Coturnix delegorguei (Harlequin quail), this protein is Ovomucoid.